Here is a 320-residue protein sequence, read N- to C-terminus: Cytochrome f (320 aa).

An N-terminal signal peptide occupies residues Met1–Ser36. Heme-binding residues include Tyr37, Cys57, Cys60, and His61. The chain crosses the membrane as a helical span at residues Leu286–Leu305.

Belongs to the cytochrome f family. As to quaternary structure, the 4 large subunits of the cytochrome b6-f complex are cytochrome b6, subunit IV (17 kDa polypeptide, petD), cytochrome f and the Rieske protein, while the 4 small subunits are PetG, PetL, PetM and PetN. The complex functions as a dimer. The cofactor is heme.

The protein localises to the plastid. It localises to the chloroplast thylakoid membrane. In terms of biological role, component of the cytochrome b6-f complex, which mediates electron transfer between photosystem II (PSII) and photosystem I (PSI), cyclic electron flow around PSI, and state transitions. The polypeptide is Cytochrome f (petA) (Cyanidium caldarium (Red alga)).